We begin with the raw amino-acid sequence, 35 residues long: Apolipophorin-3 (35 aa).

In terms of assembly, equilibrium between a soluble monomer and a bound lipoprotein form. Apolipophorin-3 associates with lipophorin during lipid loading until each particle contains 9 or 14 molecules of apolipophorin-3. As to expression, hemolymph.

It localises to the secreted. In terms of biological role, assists in the loading of diacylglycerol, generated from triacylglycerol stores in the fat body through the action of adipokinetic hormone, into lipophorin, the hemolymph lipoprotein. It increases the lipid carrying capacity of lipophorin by covering the expanding hydrophobic surface resulting from diacylglycerol uptake. It thus plays a critical role in the transport of lipids during flight in several species of insects. Has hemagglutinating activity towards rabbit erythrocytes. This chain is Apolipophorin-3, found in Heliothis virescens (Tobacco budworm moth).